The chain runs to 488 residues: 3-octaprenyl-4-hydroxybenzoate carboxy-lyase (488 aa).

N172 lines the Mn(2+) pocket. Prenylated FMN-binding positions include 175 to 177 (IYR), 189 to 191 (RWL), and 194 to 195 (RG). E238 contacts Mn(2+). D287 acts as the Proton donor in catalysis.

This sequence belongs to the UbiD family. As to quaternary structure, homohexamer. It depends on prenylated FMN as a cofactor. The cofactor is Mn(2+).

It is found in the cell membrane. It carries out the reaction a 4-hydroxy-3-(all-trans-polyprenyl)benzoate + H(+) = a 2-(all-trans-polyprenyl)phenol + CO2. Its pathway is cofactor biosynthesis; ubiquinone biosynthesis. In terms of biological role, catalyzes the decarboxylation of 3-octaprenyl-4-hydroxy benzoate to 2-octaprenylphenol, an intermediate step in ubiquinone biosynthesis. In Ectopseudomonas mendocina (strain ymp) (Pseudomonas mendocina), this protein is 3-octaprenyl-4-hydroxybenzoate carboxy-lyase.